Reading from the N-terminus, the 892-residue chain is Translation initiation factor IF-2 (892 aa).

Residues 66–305 (TRSTLNIPGT…SLQQGFQKPA (240 aa)) are disordered. The segment covering 68–82 (STLNIPGTGGKSKSV) has biased composition (polar residues). Composition is skewed to basic and acidic residues over residues 93–159 (VKRD…KDKV) and 166–216 (DMTK…EENK). Residues 254 to 269 (GRGRNAKAARPAKKGK) are compositionally biased toward basic residues. Residues 270–282 (HAESKADREEARA) are compositionally biased toward basic and acidic residues. The tr-type G domain occupies 391–560 (PRAPVVTIMG…LLQAEVLELK (170 aa)). The interval 400–407 (GHVDHGKT) is G1. 400-407 (GHVDHGKT) contributes to the GTP binding site. Residues 425 to 429 (GITQH) are G2. Residues 446–449 (DTPG) are G3. GTP is bound by residues 446–450 (DTPGH) and 500–503 (NKID). Positions 500 to 503 (NKID) are G4. The segment at 536 to 538 (SAK) is G5.

The protein belongs to the TRAFAC class translation factor GTPase superfamily. Classic translation factor GTPase family. IF-2 subfamily.

It localises to the cytoplasm. Its function is as follows. One of the essential components for the initiation of protein synthesis. Protects formylmethionyl-tRNA from spontaneous hydrolysis and promotes its binding to the 30S ribosomal subunits. Also involved in the hydrolysis of GTP during the formation of the 70S ribosomal complex. This Salmonella typhi protein is Translation initiation factor IF-2.